A 392-amino-acid chain; its full sequence is Small ribosomal subunit protein bS1 (392 aa).

S1 motif domains follow at residues 16–90 (GDKV…LSKR), 108–173 (DEVI…LSRK), 194–262 (GDVI…LSIK), and 279–348 (DDVI…LSIK). Residues 361 to 380 (ASTTQSYLEDDNDEDKPTLG) are disordered.

This sequence belongs to the bacterial ribosomal protein bS1 family.

In terms of biological role, binds mRNA; thus facilitating recognition of the initiation point. It is needed to translate mRNA with a short Shine-Dalgarno (SD) purine-rich sequence. The chain is Small ribosomal subunit protein bS1 (rpsA) from Staphylococcus epidermidis (strain ATCC 35984 / DSM 28319 / BCRC 17069 / CCUG 31568 / BM 3577 / RP62A).